Here is a 1266-residue protein sequence, read N- to C-terminus: Rho GTPase-activating protein 29 (1266 aa).

4 positions are modified to phosphoserine: Ser-166, Ser-171, Ser-174, and Ser-185. The 271-residue stretch at 187–457 (IELDNLLLKN…SAKLYDPGQE (271 aa)) folds into the F-BAR domain. Residues 291 to 413 (RKNEMEKQRK…EILTQLRTLV (123 aa)) are a coiled coil. Ser-496, Ser-516, and Ser-549 each carry phosphoserine. The span at 538-556 (SESTGGSSESRSLDSESIS) shows a compositional bias: low complexity. Residues 538–596 (SESTGGSSESRSLDSESISPGDFHRKLPRTPSSGTMSSADDLDEREPPSPSEAGPNSLG) are disordered. The Phorbol-ester/DAG-type zinc-finger motif lies at 609-654 (THKFRKLRSPTKCRDCEGIVMFPGVECEECLLVCHRKCLENLVIVC). The Rho-GAP domain maps to 668–883 (AEFIQVAKKE…FLITYAQKIF (216 aa)). Phosphoserine is present on residues Ser-915, Ser-951, and Ser-1023. Disordered stretches follow at residues 1033 to 1054 (AGSP…KFGK), 1114 to 1153 (VSTG…DSCP), and 1222 to 1248 (VQTS…QRPR). Over residues 1115 to 1127 (STGNNRGHSSGAA) the composition is skewed to polar residues. A compositionally biased stretch (basic and acidic residues) spans 1132-1148 (AHADPARSARDTSEHSS). Residues Ser-1149 and Ser-1151 each carry the phosphoserine modification. The segment at 1263–1266 (PQFV) is interaction with PTPN13/PTPL1.

As to quaternary structure, interacts with PTPN13/PTPL1. Interacts with RAP2A via its coiled coil domain. Interacts with RASIP1.

GTPase activator for the Rho-type GTPases by converting them to an inactive GDP-bound state. Has strong activity toward RHOA, and weaker activity toward RAC1 and CDC42. May act as a specific effector of RAP2A to regulate Rho. In concert with RASIP1, suppresses RhoA signaling and dampens ROCK and MYH9 activities in endothelial cells and plays an essential role in blood vessel tubulogenesis. The sequence is that of Rho GTPase-activating protein 29 (Arhgap29) from Rattus norvegicus (Rat).